The following is a 173-amino-acid chain: uncharacterized protein (173 aa).

The helical transmembrane segment at 1–21 (MFIVFYLILIIFIFIYFHVYI) threads the bilayer.

The protein to T.pallidum TP0711.

It is found in the membrane. This is an uncharacterized protein from Borreliella burgdorferi (strain ATCC 35210 / DSM 4680 / CIP 102532 / B31) (Borrelia burgdorferi).